Consider the following 530-residue polypeptide: Glucose-6-phosphate isomerase (530 aa).

Residue Glu-322 is the Proton donor of the active site. Residues His-351 and Lys-455 contribute to the active site.

It belongs to the GPI family.

Its subcellular location is the cytoplasm. It catalyses the reaction alpha-D-glucose 6-phosphate = beta-D-fructose 6-phosphate. The protein operates within carbohydrate biosynthesis; gluconeogenesis. It functions in the pathway carbohydrate degradation; glycolysis; D-glyceraldehyde 3-phosphate and glycerone phosphate from D-glucose: step 2/4. In terms of biological role, catalyzes the reversible isomerization of glucose-6-phosphate to fructose-6-phosphate. The sequence is that of Glucose-6-phosphate isomerase from Citrifermentans bemidjiense (strain ATCC BAA-1014 / DSM 16622 / JCM 12645 / Bem) (Geobacter bemidjiensis).